The sequence spans 560 residues: Membrane protein insertase YidC (560 aa).

6 consecutive transmembrane segments (helical) span residues 5–25 (IINL…WQYF), 334–354 (AIDF…MNFF), 357–377 (YVGN…LLMF), 431–451 (LPIL…YVTI), 476–496 (LFGL…WPIL), and 522–542 (FMPL…LIYW).

It belongs to the OXA1/ALB3/YidC family. Type 1 subfamily. In terms of assembly, interacts with the Sec translocase complex via SecD. Specifically interacts with transmembrane segments of nascent integral membrane proteins during membrane integration.

Its subcellular location is the cell inner membrane. Functionally, required for the insertion and/or proper folding and/or complex formation of integral membrane proteins into the membrane. Involved in integration of membrane proteins that insert both dependently and independently of the Sec translocase complex, as well as at least some lipoproteins. Aids folding of multispanning membrane proteins. The polypeptide is Membrane protein insertase YidC (Rickettsia akari (strain Hartford)).